A 249-amino-acid chain; its full sequence is MTIKKLILVRHGESEWNKENRFTGWADVDLSEKGRVEAQQAGNLLKKKGFSFDFAYTSVLRRATNTLSLILDVLQQQNLPIEKSWRLNERHYGALQGLNKSETAAKFGSEQVKQWRRGFSTLPPALNLNDPRAPANDSLYATLNKNDLPLTESLATTVDRVVPYWDEVVKPRIIDGKRVIIVAHGNSIRALVKYVDHLSEEEIMEINIPTAVPLVYEFNSSLQPINHYYLGNAEEITQKVAAVAAQGKA.

Substrate is bound by residues 10–17, 23–24, Arg62, 89–92, Lys100, 116–117, and 185–186; these read RHGESEWN, TG, ERHY, RR, and GN. His11 functions as the Tele-phosphohistidine intermediate in the catalytic mechanism. Glu89 functions as the Proton donor/acceptor in the catalytic mechanism.

The protein belongs to the phosphoglycerate mutase family. BPG-dependent PGAM subfamily. Homodimer.

It catalyses the reaction (2R)-2-phosphoglycerate = (2R)-3-phosphoglycerate. It functions in the pathway carbohydrate degradation; glycolysis; pyruvate from D-glyceraldehyde 3-phosphate: step 3/5. Functionally, catalyzes the interconversion of 2-phosphoglycerate and 3-phosphoglycerate. In Hamiltonella defensa subsp. Acyrthosiphon pisum (strain 5AT), this protein is 2,3-bisphosphoglycerate-dependent phosphoglycerate mutase.